A 904-amino-acid chain; its full sequence is Translation initiation factor IF-2 (904 aa).

A disordered region spans residues 239–316; that stretch reads QAATQAKTSE…DDGQGSFQAP (78 aa). The segment covering 248–278 has biased composition (basic and acidic residues); it reads EGAEKGTLHKKPETPGKKGDKGGRAADDGKK. The tr-type G domain maps to 404–571; sequence HRAPVVTVMG…QVLLQAEILE (168 aa). The G1 stretch occupies residues 413–420; sequence GHVDHGKT. A GTP-binding site is contributed by 413–420; it reads GHVDHGKT. A G2 region spans residues 438–442; the sequence is GITQH. The segment at 459–462 is G3; sequence DTPG. GTP is bound by residues 459 to 463 and 513 to 516; these read DTPGH and NKID. Residues 513–516 are G4; that stretch reads NKID. The tract at residues 549–551 is G5; sequence SAK.

The protein belongs to the TRAFAC class translation factor GTPase superfamily. Classic translation factor GTPase family. IF-2 subfamily.

It is found in the cytoplasm. In terms of biological role, one of the essential components for the initiation of protein synthesis. Protects formylmethionyl-tRNA from spontaneous hydrolysis and promotes its binding to the 30S ribosomal subunits. Also involved in the hydrolysis of GTP during the formation of the 70S ribosomal complex. In Dechloromonas aromatica (strain RCB), this protein is Translation initiation factor IF-2.